The sequence spans 314 residues: MKKNPKILLIGSGNIGGTLAHLISLKNLGDIVLFDVAEGIPQGKALDIMQANTLAGSDIKIKGTNDYKDIEGSDAIIITAGLPRKPGMSRDDLISVNTGIMKSVAENVKKYAPNAFVIVITNPLDVMVYVMLKESGLPHNKVIGMAGVLDSSRFNFFLAEEFKVSTNSVSSIVLGGHGDAMVPLARYSTVKGVPIPDLVKMGLSTNERIEKIIDRTRNGGGEIVALLKTGSAYYAPAASAVEMLESYLQDKRQILTCAAYLQGEYGVKDLYAGVPIIIGKNGVEKVIELQLTTNEQALFDKSVDGVRKLIEAVK.

NAD(+) is bound by residues 11–16 and D35; that span reads GSGNIG. R84 and R90 together coordinate substrate. NAD(+)-binding positions include N97 and 120-122; that span reads ITN. Substrate-binding residues include N122 and R153. The active-site Proton acceptor is H177.

The protein belongs to the LDH/MDH superfamily. MDH type 3 family.

It catalyses the reaction (S)-malate + NAD(+) = oxaloacetate + NADH + H(+). Its function is as follows. Catalyzes the reversible oxidation of malate to oxaloacetate. This Rickettsia bellii (strain RML369-C) protein is Malate dehydrogenase.